A 174-amino-acid polypeptide reads, in one-letter code: Beta-lactoglobulin (174 aa).

The N-terminal stretch at 1 to 18 (MKFLLLTVGLALIGAIQA) is a signal peptide. Disulfide bonds link Cys-79-Cys-172 and Cys-122-Cys-134.

Belongs to the calycin superfamily. Lipocalin family. In terms of assembly, monomer.

The protein resides in the secreted. In terms of biological role, lactoglobulin is the primary component of whey, it binds retinol and is probably involved in the transport of that molecule. In Notamacropus eugenii (Tammar wallaby), this protein is Beta-lactoglobulin (LGB).